The chain runs to 352 residues: Biotin synthase (352 aa).

The region spanning asparagine 44–lysine 262 is the Radical SAM core domain. [4Fe-4S] cluster is bound by residues cysteine 59, cysteine 63, and cysteine 66. Positions 103, 134, 194, and 266 each coordinate [2Fe-2S] cluster.

Belongs to the radical SAM superfamily. Biotin synthase family. In terms of assembly, homodimer. The cofactor is [4Fe-4S] cluster. [2Fe-2S] cluster is required as a cofactor.

It catalyses the reaction (4R,5S)-dethiobiotin + (sulfur carrier)-SH + 2 reduced [2Fe-2S]-[ferredoxin] + 2 S-adenosyl-L-methionine = (sulfur carrier)-H + biotin + 2 5'-deoxyadenosine + 2 L-methionine + 2 oxidized [2Fe-2S]-[ferredoxin]. The protein operates within cofactor biosynthesis; biotin biosynthesis; biotin from 7,8-diaminononanoate: step 2/2. Functionally, catalyzes the conversion of dethiobiotin (DTB) to biotin by the insertion of a sulfur atom into dethiobiotin via a radical-based mechanism. This Pseudomonas putida (strain GB-1) protein is Biotin synthase.